A 1084-amino-acid chain; its full sequence is AP-3 complex subunit beta-1 (1084 aa).

A compositionally biased stretch (polar residues) spans 1–11; sequence MSSNSFAYNEQ. A disordered region spans residues 1–26; the sequence is MSSNSFAYNEQSGGGEATELGQEATS. Ser276 and Ser609 each carry phosphoserine. Residues 663–800 are disordered; that stretch reads AGKAKKENPD…KEKKTKQERN (138 aa). Positions 666 to 677 are enriched in basic and acidic residues; sequence AKKENPDKKFYS. Residues 678–717 are compositionally biased toward acidic residues; it reads ESEEEEDSSESSSDSESESGSESGEDEEDDRSGDSAEDSG. Residues 718 to 729 show a composition bias toward low complexity; sequence ESGSEPEAGKGR. Residues 738–753 are compositionally biased toward basic and acidic residues; that stretch reads GRGDSKDVDKEKENSK. Phosphoserine is present on Ser742. A compositionally biased stretch (low complexity) spans 754–767; that stretch reads TSESSSGESSSIEE. A compositionally biased stretch (acidic residues) spans 768 to 781; the sequence is SSSDSESESESESE. Basic and acidic residues predominate over residues 782-800; the sequence is SESRKVTKEKEKKTKQERN.

This sequence belongs to the adaptor complexes large subunit family. Adaptor protein complex 3 (AP-3) is a heterotetramer composed of two large adaptins (delta-type subunit AP3D1 and beta-type subunit AP3B1 or AP3B2), a medium adaptin (mu-type subunit AP3M1 or AP3M2) and a small adaptin (sigma-type subunit APS1 or AP3S2). AP-3 associates with the BLOC-1 complex. Interacts with KIF3A; interaction is direct; interaction is impaired by pyrophosphorylation of AP3B1. Phosphorylated on serine residues. In terms of processing, pyrophosphorylation by 5-diphosphoinositol pentakisphosphate (5-IP7) impairs interaction with KIF3A. Serine pyrophosphorylation is achieved by Mg(2+)-dependent, but enzyme independent transfer of a beta-phosphate from a inositol pyrophosphate to a pre-phosphorylated serine residue.

Its subcellular location is the cytoplasmic vesicle. The protein localises to the clathrin-coated vesicle membrane. It is found in the golgi apparatus. Subunit of non-clathrin- and clathrin-associated adaptor protein complex 3 (AP-3) that plays a role in protein sorting in the late-Golgi/trans-Golgi network (TGN) and/or endosomes. The AP complexes mediate both the recruitment of clathrin to membranes and the recognition of sorting signals within the cytosolic tails of transmembrane cargo molecules. AP-3 appears to be involved in the sorting of a subset of transmembrane proteins targeted to lysosomes and lysosome-related organelles. In concert with the BLOC-1 complex, AP-3 is required to target cargos into vesicles assembled at cell bodies for delivery into neurites and nerve terminals. This Bos taurus (Bovine) protein is AP-3 complex subunit beta-1 (AP3B1).